The primary structure comprises 244 residues: Eukaryotic translation initiation factor 6 (244 aa).

Phosphoserine; by CK1 occurs at positions 174 and 175.

It belongs to the eIF-6 family. Monomer. Associates with the 60S ribosomal subunit. Phosphorylation at Ser-174 and Ser-175 promotes nuclear export.

Its subcellular location is the cytoplasm. It is found in the nucleus. It localises to the nucleolus. Functionally, binds to the 60S ribosomal subunit and prevents its association with the 40S ribosomal subunit to form the 80S initiation complex in the cytoplasm. Is also involved in ribosome biogenesis. Associates with pre-60S subunits in the nucleus and is involved in its nuclear export. The protein is Eukaryotic translation initiation factor 6 (tif6) of Schizosaccharomyces pombe (strain 972 / ATCC 24843) (Fission yeast).